Here is a 92-residue protein sequence, read N- to C-terminus: DNA-directed RNA polymerase subunit Rpo11 (92 aa).

The protein belongs to the archaeal Rpo11/eukaryotic RPB11/RPC19 RNA polymerase subunit family. As to quaternary structure, part of the RNA polymerase complex.

Its subcellular location is the cytoplasm. It catalyses the reaction RNA(n) + a ribonucleoside 5'-triphosphate = RNA(n+1) + diphosphate. Its function is as follows. DNA-dependent RNA polymerase (RNAP) catalyzes the transcription of DNA into RNA using the four ribonucleoside triphosphates as substrates. This Methanosarcina mazei (strain ATCC BAA-159 / DSM 3647 / Goe1 / Go1 / JCM 11833 / OCM 88) (Methanosarcina frisia) protein is DNA-directed RNA polymerase subunit Rpo11.